The primary structure comprises 133 residues: Small ribosomal subunit protein uS11 (133 aa).

The interval 114 to 133 is disordered; sequence VTPIPHDGTRPPGGKRGRRV.

Belongs to the universal ribosomal protein uS11 family. As to quaternary structure, part of the 30S ribosomal subunit.

Located on the platform of the 30S subunit. The chain is Small ribosomal subunit protein uS11 from Archaeoglobus fulgidus (strain ATCC 49558 / DSM 4304 / JCM 9628 / NBRC 100126 / VC-16).